Reading from the N-terminus, the 396-residue chain is MKSLCLLAIVAVVSAEVYFKEEFNDASWEKRWVQSKHKDDFGAFKLSAGKFFDVESRDQGIQTSQDAKFYSRAAKFDKEFSNKGKTLVIQYTVKHEQGIDCGGGYVKVMRGDADLADFHGETPYNVMFGPDICGPTRRVHVILNYKGENKLIKKEITCKSDELTHLYTLILNADNTYEVKIDGESAQTGSLEEDWDLLPAKKIKDPDAKKPEDWDEREYIDDAEDVKPEDWEKPEHIPDPDAKKPEDWDDEMDGEWEPPMIDNPEYKGEWKPKQIKNPAYKGKWIHPEIENPEYTPDDELYLYENWGAIGFDLWQVKSGTIFDNVLITDSVEEAEAHAAETFDKLKTVEKEKKEKADEEARKVEEEARKKAEEEKEAKKDDDEEEEKEEEEGHDEL.

Positions 1–15 (MKSLCLLAIVAVVSA) are cleaved as a signal peptide. Cys-101 and Cys-133 are oxidised to a cystine. An alpha-D-glucoside contacts are provided by Tyr-105, Lys-107, Tyr-124, and Asp-131. 7 tandem repeats follow at residues 186 to 197 (AQTGSLEEDWDL), 205 to 216 (DPDAKKPEDWDE), 222 to 233 (DAEDVKPEDWEK), 239 to 250 (DPDAKKPEDWDD), 254 to 264 (GEWEPPMIDNP), 268 to 278 (GEWKPKQIKNP), and 282 to 292 (GKWIHPEIENP). The segment at 186–250 (AQTGSLEEDW…DAKKPEDWDD (65 aa)) is 4 X approximate repeats. Residues 193 to 301 (EDWDLLPAKK…PEYTPDDELY (109 aa)) form a P-domain region. A compositionally biased stretch (basic and acidic residues) spans 202 to 212 (KIKDPDAKKPE). The tract at residues 202–250 (KIKDPDAKKPEDWDEREYIDDAEDVKPEDWEKPEHIPDPDAKKPEDWDD) is disordered. Positions 213 to 224 (DWDEREYIDDAE) are enriched in acidic residues. A compositionally biased stretch (basic and acidic residues) spans 225–246 (DVKPEDWEKPEHIPDPDAKKPE). The interval 254-292 (GEWEPPMIDNPEYKGEWKPKQIKNPAYKGKWIHPEIENP) is 3 X approximate repeats. The tract at residues 302 to 396 (LYENWGAIGF…KEEEEGHDEL (95 aa)) is C-domain. Asp-312 is a binding site for an alpha-D-glucoside. Residues 342 to 380 (FDKLKTVEKEKKEKADEEARKVEEEARKKAEEEKEAKKD) show a composition bias toward basic and acidic residues. The interval 342–396 (FDKLKTVEKEKKEKADEEARKVEEEARKKAEEEKEAKKDDDEEEEKEEEEGHDEL) is disordered. The span at 381 to 396 (DDEEEEKEEEEGHDEL) shows a compositional bias: acidic residues. A Prevents secretion from ER motif is present at residues 393-396 (HDEL).

The protein belongs to the calreticulin family.

It is found in the endoplasmic reticulum lumen. In terms of biological role, molecular calcium-binding chaperone promoting folding, oligomeric assembly and quality control in the ER via the calreticulin/calnexin cycle. This lectin may interact transiently with almost all of the monoglucosylated glycoproteins that are synthesized in the ER. Probably by controlling the folding of extracellular matrix protein unc-52/Perlecan, may play a role in the formation of fibrous organelles, a hemidesmosome-like structure attaching muscles to the epidermis. Protects dopaminergic neurons against oxidative stress-induced neurodegeneration. The sequence is that of Calreticulin (crt-1) from Caenorhabditis briggsae.